Consider the following 388-residue polypeptide: UDP-galactose transporter senju (388 aa).

The next 10 helical transmembrane spans lie at 13-33 (LTFV…IFVT), 46-66 (TVTV…CLYC), 84-104 (VLGL…LAFV), 113-133 (TYYL…QIIF), 142-162 (WISL…FGSF), 202-222 (FSLS…AGVY), 236-256 (IFVQ…VILL), 276-296 (FSVL…SFFL), 309-329 (ALEL…PIYM), and 331-351 (TALA…SPVV).

The protein belongs to the nucleotide-sugar transporter family.

It is found in the golgi apparatus membrane. Functionally, UDP-galactose transporter involved in the synthesis of galactose-containing glycans. Plays a role in quiescence of the innate immune response, possibly by regulating glycosylation of the Toll pathway ligand spz. The sequence is that of UDP-galactose transporter senju from Drosophila melanogaster (Fruit fly).